The primary structure comprises 86 residues: uncharacterized protein (86 aa).

This is an uncharacterized protein from Helicobacter pylori (strain J99 / ATCC 700824) (Campylobacter pylori J99).